The following is a 301-amino-acid chain: Eukaryotic translation initiation factor 3 subunit F (301 aa).

An MPN domain is found at 32-169 (VHVHPVALFS…IKSYISSPLG (138 aa)).

It belongs to the eIF-3 subunit F family. In terms of assembly, component of the eukaryotic translation initiation factor 3 (eIF-3) complex.

Its subcellular location is the cytoplasm. Functionally, component of the eukaryotic translation initiation factor 3 (eIF-3) complex, which is involved in protein synthesis of a specialized repertoire of mRNAs and, together with other initiation factors, stimulates binding of mRNA and methionyl-tRNAi to the 40S ribosome. The eIF-3 complex specifically targets and initiates translation of a subset of mRNAs involved in cell proliferation. This Mycosarcoma maydis (Corn smut fungus) protein is Eukaryotic translation initiation factor 3 subunit F.